The sequence spans 546 residues: Carboxylic ester hydrolase FVEG_12634 (546 aa).

Residues 72–91 (FTDGTKICPQPPSSNTPDPS) form a disordered region. Serine 214 functions as the Acyl-ester intermediate in the catalytic mechanism.

It belongs to the type-B carboxylesterase/lipase family.

It catalyses the reaction a carboxylic ester + H2O = an alcohol + a carboxylate + H(+). In terms of biological role, carboxylic ester hydrolase; part of the Fusarium detoxification of benzoxazolinone cluster 2 (FDB2) involved in the degradation of benzoxazolinones produced by the host plant. Maize, wheat, and rye produce the 2 benzoxazinone phytoanticipins 2,4-dihy-droxy-7-methoxy-1,4-benzoxazin-3-one (DIMBOA) and 2,4-dihydroxy-1,4-benzoxazin-3-one (DIBOA) that, due to their inherent instability once released, spontaneously degrade to the more stable corresponding benzoxazolinones, 6-methoxy-2-benzoxazolinone (MBOA) and 2-benzoxazolinone (BOA), respectively. The first step in the detoxification of benzoxazolinones involves the hydrolysis of the cyclic ester bond of benzoxazolinones by the FDB1 cluster gamma-lactamase MBL1 to aminophenols. MBL1 is able to convert BOA into 2-aminophenol (2-AP), as well as MBOA into 5-methoxy-2-aminophenol (2-AMP). The FDB2 cluster N-malonyltransferase FDB2/NAT1 then metabolizes aminophenols via N-malonylation to non-toxic malonamic acids. FDB2/NAT1 converts 2-AP into N-(2-hydroxyphenyl) malonamic acid (HPMA) and 2-AMP into N-(2-hydroxy-4-methoxyphenyl) malonamic acid (HMPMA). The duplicated dienlactone hydrolases DLH1 and DLH2 may provide redundant function for hydrolyzing the lactone moiety in the BOA molecule. The roles of the amidases an other enzymes encoded by the 2 FDB clusters have not been identified so far. The polypeptide is Carboxylic ester hydrolase FVEG_12634 (Gibberella moniliformis (strain M3125 / FGSC 7600) (Maize ear and stalk rot fungus)).